Reading from the N-terminus, the 281-residue chain is Elongation factor Ts (281 aa).

The interval 80 to 83 (TDFV) is involved in Mg(2+) ion dislocation from EF-Tu.

The protein belongs to the EF-Ts family.

The protein resides in the cytoplasm. Associates with the EF-Tu.GDP complex and induces the exchange of GDP to GTP. It remains bound to the aminoacyl-tRNA.EF-Tu.GTP complex up to the GTP hydrolysis stage on the ribosome. This chain is Elongation factor Ts, found in Vibrio atlanticus (strain LGP32) (Vibrio splendidus (strain Mel32)).